A 128-amino-acid chain; its full sequence is Ribonuclease P protein component (128 aa).

It belongs to the RnpA family. As to quaternary structure, consists of a catalytic RNA component (M1 or rnpB) and a protein subunit.

It catalyses the reaction Endonucleolytic cleavage of RNA, removing 5'-extranucleotides from tRNA precursor.. In terms of biological role, RNaseP catalyzes the removal of the 5'-leader sequence from pre-tRNA to produce the mature 5'-terminus. It can also cleave other RNA substrates such as 4.5S RNA. The protein component plays an auxiliary but essential role in vivo by binding to the 5'-leader sequence and broadening the substrate specificity of the ribozyme. The sequence is that of Ribonuclease P protein component from Prochlorococcus marinus (strain MIT 9312).